We begin with the raw amino-acid sequence, 164 residues long: UPF0304 protein KPK_1463 (164 aa).

This sequence belongs to the UPF0304 family.

This chain is UPF0304 protein KPK_1463, found in Klebsiella pneumoniae (strain 342).